A 230-amino-acid chain; its full sequence is Thiamine-triphosphatase (230 aa).

Ala2 carries the N-acetylalanine modification. Residues 5 to 201 (LIEVERKFLP…AKLIVYLQRF (197 aa)) form the CYTH domain. Positions 7 and 9 each coordinate Mg(2+). Residues Lys11, Arg55, Arg57, Lys65, and Arg125 each coordinate substrate. Residues Asp145, Glu157, and Glu159 each contribute to the Mg(2+) site. Substrate is bound at residue Glu157. Lys193 provides a ligand contact to substrate.

The protein belongs to the ThTPase family. In terms of assembly, monomer. The cofactor is Mg(2+). Widely expressed but at a low level.

The protein resides in the cytoplasm. The catalysed reaction is thiamine triphosphate + H2O = thiamine diphosphate + phosphate + H(+). In terms of biological role, hydrolase highly specific for thiamine triphosphate (ThTP). The polypeptide is Thiamine-triphosphatase (THTPA) (Homo sapiens (Human)).